Reading from the N-terminus, the 196-residue chain is Molybdenum cofactor guanylyltransferase (196 aa).

GTP contacts are provided by residues L12 to G14, K25, N53, D71, and D101. D101 is a binding site for Mg(2+).

This sequence belongs to the MobA family. As to quaternary structure, monomer. The cofactor is Mg(2+).

It is found in the cytoplasm. It catalyses the reaction Mo-molybdopterin + GTP + H(+) = Mo-molybdopterin guanine dinucleotide + diphosphate. In terms of biological role, transfers a GMP moiety from GTP to Mo-molybdopterin (Mo-MPT) cofactor (Moco or molybdenum cofactor) to form Mo-molybdopterin guanine dinucleotide (Mo-MGD) cofactor. This chain is Molybdenum cofactor guanylyltransferase, found in Bordetella petrii (strain ATCC BAA-461 / DSM 12804 / CCUG 43448).